The primary structure comprises 338 residues: DNA-directed RNA polymerase subunit alpha (338 aa).

The interval 1–225 (MLISQRPTIT…ELFGLARELN (225 aa)) is alpha N-terminal domain (alpha-NTD). The alpha C-terminal domain (alpha-CTD) stretch occupies residues 242 to 338 (YIAAYSMPIE…YIDVEAEDSE (97 aa)). The segment at 319-338 (LEGYDAETGGYIDVEAEDSE) is disordered.

It belongs to the RNA polymerase alpha chain family. As to quaternary structure, homodimer. The RNAP catalytic core consists of 2 alpha, 1 beta, 1 beta' and 1 omega subunit. When a sigma factor is associated with the core the holoenzyme is formed, which can initiate transcription.

The enzyme catalyses RNA(n) + a ribonucleoside 5'-triphosphate = RNA(n+1) + diphosphate. Functionally, DNA-dependent RNA polymerase catalyzes the transcription of DNA into RNA using the four ribonucleoside triphosphates as substrates. In Corynebacterium glutamicum (strain ATCC 13032 / DSM 20300 / JCM 1318 / BCRC 11384 / CCUG 27702 / LMG 3730 / NBRC 12168 / NCIMB 10025 / NRRL B-2784 / 534), this protein is DNA-directed RNA polymerase subunit alpha.